Here is an 85-residue protein sequence, read N- to C-terminus: Large ribosomal subunit protein bL27 (85 aa).

It belongs to the bacterial ribosomal protein bL27 family.

In Cellvibrio japonicus (strain Ueda107) (Pseudomonas fluorescens subsp. cellulosa), this protein is Large ribosomal subunit protein bL27.